The following is a 284-amino-acid chain: 3-methyl-2-oxobutanoate hydroxymethyltransferase (284 aa).

2 residues coordinate Mg(2+): D44 and D83. 3-methyl-2-oxobutanoate is bound by residues 44 to 45, D83, and K112; that span reads DS. A Mg(2+)-binding site is contributed by E114. Residue E181 is the Proton acceptor of the active site.

This sequence belongs to the PanB family. As to quaternary structure, homodecamer; pentamer of dimers. Mg(2+) is required as a cofactor.

The protein resides in the cytoplasm. The enzyme catalyses 3-methyl-2-oxobutanoate + (6R)-5,10-methylene-5,6,7,8-tetrahydrofolate + H2O = 2-dehydropantoate + (6S)-5,6,7,8-tetrahydrofolate. Its pathway is cofactor biosynthesis; coenzyme A biosynthesis. With respect to regulation, neither activated nor inhibited by coenzyme A. Functionally, catalyzes the reversible reaction in which hydroxymethyl group from 5,10-methylenetetrahydrofolate is transferred onto alpha-ketoisovalerate to form ketopantoate. The polypeptide is 3-methyl-2-oxobutanoate hydroxymethyltransferase (Thermococcus kodakarensis (strain ATCC BAA-918 / JCM 12380 / KOD1) (Pyrococcus kodakaraensis (strain KOD1))).